Reading from the N-terminus, the 484-residue chain is Poly(A) RNA polymerase GLD2 (484 aa).

Residues Ser62 and Ser69 each carry the phosphoserine modification. Residues 76–92 (KRLSDEKNLPLDGKRQR) carry the Nuclear localization signal motif. Position 95 is a phosphoserine (Ser95). 2 residues coordinate Mg(2+): Asp213 and Asp215. The PAP-associated domain occupies 386–440 (NLGDLLLGFLKYYATEFDWNSQMISVREAKAIPRPDGIEWRNKYICVEEPFDGTN).

It belongs to the DNA polymerase type-B-like family. GLD2 subfamily. Interacts with CPEB1, CPEB2, CPSF1 and PABPC1. Interacts with QKI isoform QKI7; promoting recruitment to miRNA miR-122 and miR-122 stabilization. Requires Mg(2+) as cofactor. Mn(2+) serves as cofactor.

The protein resides in the cytoplasm. It is found in the nucleus. The enzyme catalyses RNA(n) + ATP = RNA(n)-3'-adenine ribonucleotide + diphosphate. Its function is as follows. Cytoplasmic poly(A) RNA polymerase that adds successive AMP monomers to the 3'-end of specific RNAs, forming a poly(A) tail. In contrast to the canonical nuclear poly(A) RNA polymerase, it only adds poly(A) to selected cytoplasmic mRNAs. Does not play a role in replication-dependent histone mRNA degradation. Adds a single nucleotide to the 3' end of specific miRNAs, monoadenylation stabilizes and prolongs the activity of some but not all miRNAs. The sequence is that of Poly(A) RNA polymerase GLD2 from Bos taurus (Bovine).